Here is a 180-residue protein sequence, read N- to C-terminus: ATP synthase subunit delta (180 aa).

This sequence belongs to the ATPase delta chain family. F-type ATPases have 2 components, F(1) - the catalytic core - and F(0) - the membrane proton channel. F(1) has five subunits: alpha(3), beta(3), gamma(1), delta(1), epsilon(1). CF(0) has four main subunits: a(1), b(1), b'(1) and c(10-14). The alpha and beta chains form an alternating ring which encloses part of the gamma chain. F(1) is attached to F(0) by a central stalk formed by the gamma and epsilon chains, while a peripheral stalk is formed by the delta, b and b' chains.

It localises to the cellular thylakoid membrane. Functionally, f(1)F(0) ATP synthase produces ATP from ADP in the presence of a proton or sodium gradient. F-type ATPases consist of two structural domains, F(1) containing the extramembraneous catalytic core and F(0) containing the membrane proton channel, linked together by a central stalk and a peripheral stalk. During catalysis, ATP synthesis in the catalytic domain of F(1) is coupled via a rotary mechanism of the central stalk subunits to proton translocation. In terms of biological role, this protein is part of the stalk that links CF(0) to CF(1). It either transmits conformational changes from CF(0) to CF(1) or is implicated in proton conduction. This Prochlorococcus marinus (strain MIT 9301) protein is ATP synthase subunit delta.